Here is a 132-residue protein sequence, read N- to C-terminus: Small ribosomal subunit protein bS16 (132 aa).

Residues 82 to 107 (DSKVQSKKEHNANKVKKEVKKPEAKK) are compositionally biased toward basic and acidic residues. A disordered region spans residues 82–132 (DSKVQSKKEHNANKVKKEVKKPEAKKAAASKPASKPSASKSASQKKTVSKK). Residues 108-132 (AAASKPASKPSASKSASQKKTVSKK) show a composition bias toward low complexity.

The protein belongs to the bacterial ribosomal protein bS16 family.

In Malacoplasma penetrans (strain HF-2) (Mycoplasma penetrans), this protein is Small ribosomal subunit protein bS16.